Here is a 276-residue protein sequence, read N- to C-terminus: Orotidine 5'-phosphate decarboxylase (276 aa).

Lysine 95 (proton donor) is an active-site residue.

It belongs to the OMP decarboxylase family. Type 2 subfamily.

It catalyses the reaction orotidine 5'-phosphate + H(+) = UMP + CO2. The protein operates within pyrimidine metabolism; UMP biosynthesis via de novo pathway; UMP from orotate: step 2/2. This chain is Orotidine 5'-phosphate decarboxylase (pyrF), found in Mycolicibacterium smegmatis (strain ATCC 700084 / mc(2)155) (Mycobacterium smegmatis).